Consider the following 254-residue polypeptide: Hydroxyacylglutathione hydrolase (254 aa).

Residues histidine 54, histidine 56, aspartate 58, histidine 59, histidine 111, aspartate 130, and histidine 168 each contribute to the Zn(2+) site.

This sequence belongs to the metallo-beta-lactamase superfamily. Glyoxalase II family. Monomer. It depends on Zn(2+) as a cofactor.

The enzyme catalyses an S-(2-hydroxyacyl)glutathione + H2O = a 2-hydroxy carboxylate + glutathione + H(+). It participates in secondary metabolite metabolism; methylglyoxal degradation; (R)-lactate from methylglyoxal: step 2/2. Its function is as follows. Thiolesterase that catalyzes the hydrolysis of S-D-lactoyl-glutathione to form glutathione and D-lactic acid. This Legionella pneumophila (strain Paris) protein is Hydroxyacylglutathione hydrolase.